The chain runs to 507 residues: Dolichyl pyrophosphate Man9GlcNAc2 alpha-1,3-glucosyltransferase (507 aa).

Over 1–3 the chain is Cytoplasmic; the sequence is MEK. The helical transmembrane segment at 4–24 threads the bilayer; that stretch reads WYLMTVVVLIGLTVRWTVSLN. Over 25–114 the chain is Lumenal; that stretch reads SYSGAGKPPM…SQAHKLFMRT (90 aa). Asn-59 carries N-linked (GlcNAc...) asparagine glycosylation. The helical transmembrane segment at 115–135 threads the bilayer; the sequence is TVLIADLLIYIPAVVLYCCCL. The Cytoplasmic segment spans residues 136 to 143; the sequence is KEISTKKK. The helical transmembrane segment at 144 to 164 threads the bilayer; it reads IANALCILLYPGLILIDYGHF. Topologically, residues 165–172 are lumenal; it reads QYNSVSLG. A helical transmembrane segment spans residues 173–193; that stretch reads FALWGVLGISCDCDLLGSLAF. At 194-226 the chain is on the cytoplasmic side; sequence CLAINYKQMELYHALPFFCFLLGKCFKKGLKGK. Residues 227–247 form a helical membrane-spanning segment; that stretch reads GFVLLVKLACIVVASFVLCWL. Residues 248–297 lie on the Lumenal side of the membrane; the sequence is PFFTEREQTLQVLRRLFPVDRGLFEDKVANIWCSFNVFLKIKDILPRHIQ. Residues 298 to 318 traverse the membrane as a helical segment; it reads LIMSFCFTFLSLLPACIKLIL. Over 319-323 the chain is Cytoplasmic; sequence QPSSK. Residues 324–344 traverse the membrane as a helical segment; that stretch reads GFKFTLVSCALSFFLFSFQVH. The Lumenal portion of the chain corresponds to 345–361; the sequence is EKSILLVSLPVCLVLSE. A helical transmembrane segment spans residues 362 to 382; sequence IPFMSTWFLLVSTFSMLPLLL. Topologically, residues 383 to 387 are cytoplasmic; it reads KDELL. A helical membrane pass occupies residues 388–408; that stretch reads MPSVVTTMAFFIACVTSFSIF. The Lumenal segment spans residues 409–437; the sequence is EKTSEEELQLKSFSISVRKYLPCFTFLSR. Residues 438–458 traverse the membrane as a helical segment; the sequence is IIQYLFLISVITMVLLTLMTV. At 459–473 the chain is on the cytoplasmic side; it reads TLGPPQKLPDLFSVL. A helical membrane pass occupies residues 474-494; sequence VCFVSCLNFLFFLVYFNIIIV. Topologically, residues 495–507 are lumenal; it reads WDSKSGRNQKKIS.

The protein belongs to the ALG6/ALG8 glucosyltransferase family.

Its subcellular location is the endoplasmic reticulum membrane. It carries out the reaction an alpha-D-Man-(1-&gt;2)-alpha-D-Man-(1-&gt;2)-alpha-D-Man-(1-&gt;3)-[alpha-D-Man-(1-&gt;2)-alpha-D-Man-(1-&gt;3)-[alpha-D-Man-(1-&gt;2)-alpha-D-Man-(1-&gt;6)]-alpha-D-Man-(1-&gt;6)]-beta-D-Man-(1-&gt;4)-beta-D-GlcNAc-(1-&gt;4)-alpha-D-GlcNAc-diphospho-di-trans,poly-cis-dolichol + a di-trans,poly-cis-dolichyl beta-D-glucosyl phosphate = an alpha-D-Glc-(1-&gt;3)-alpha-D-Man-(1-&gt;2)-alpha-D-Man-(1-&gt;2)-alpha-D-Man-(1-&gt;3)-[alpha-D-Man-(1-&gt;2)-alpha-D-Man-(1-&gt;3)-[alpha-D-Man-(1-&gt;2)-alpha-D-Man-(1-&gt;6)]-alpha-D-Man-(1-&gt;6)]-beta-D-Man-(1-&gt;4)-beta-D-GlcNAc-(1-&gt;4)-alpha-D-GlcNAc-diphospho-di-trans,poly-cis-dolichol + a di-trans,poly-cis-dolichyl phosphate + H(+). It functions in the pathway protein modification; protein glycosylation. Its function is as follows. Dolichyl pyrophosphate Man9GlcNAc2 alpha-1,3-glucosyltransferase that operates in the biosynthetic pathway of dolichol-linked oligosaccharides, the glycan precursors employed in protein asparagine (N)-glycosylation. The assembly of dolichol-linked oligosaccharides begins on the cytosolic side of the endoplasmic reticulum membrane and finishes in its lumen. The sequential addition of sugars to dolichol pyrophosphate produces dolichol-linked oligosaccharides containing fourteen sugars, including two GlcNAcs, nine mannoses and three glucoses. Once assembled, the oligosaccharide is transferred from the lipid to nascent proteins by oligosaccharyltransferases. In the lumen of the endoplasmic reticulum, adds the first glucose residue from dolichyl phosphate glucose (Dol-P-Glc) onto the lipid-linked oligosaccharide intermediate Man(9)GlcNAc(2)-PP-Dol to produce Glc(1)Man(9)GlcNAc(2)-PP-Dol. Glc(1)Man(9)GlcNAc(2)-PP-Dol is a substrate for ALG8, the following enzyme in the biosynthetic pathway. This is Dolichyl pyrophosphate Man9GlcNAc2 alpha-1,3-glucosyltransferase from Pongo abelii (Sumatran orangutan).